A 336-amino-acid chain; its full sequence is GTPase Obg (336 aa).

The region spanning Met1–Ile159 is the Obg domain. The OBG-type G domain occupies Ala160 to Asp327. GTP-binding positions include Gly166–Ser173, Phe191–His195, Asp212–Gly215, Ser279–Asp282, and Ser308–Val310. Positions 173 and 193 each coordinate Mg(2+).

Belongs to the TRAFAC class OBG-HflX-like GTPase superfamily. OBG GTPase family. Monomer. Mg(2+) is required as a cofactor.

It localises to the cytoplasm. An essential GTPase which binds GTP, GDP and possibly (p)ppGpp with moderate affinity, with high nucleotide exchange rates and a fairly low GTP hydrolysis rate. Plays a role in control of the cell cycle, stress response, ribosome biogenesis and in those bacteria that undergo differentiation, in morphogenesis control. The chain is GTPase Obg from Sinorhizobium medicae (strain WSM419) (Ensifer medicae).